The primary structure comprises 469 residues: RNA-editing ligase 1, mitochondrial (469 aa).

A mitochondrion-targeting transit peptide spans 1–44 (MQLQRLGAPLLKRLVGGCIRQSTAPIMPCVVVSGSGGFLTPVRT). Residues 59–61 (IEI), 86–92 (EKVHGTN), asparagine 92, arginine 111, glutamate 159, phenylalanine 209, and 307–309 (KLR) each bind ATP. Lysine 87 serves as the catalytic N6-AMP-lysine intermediate. The interval 450–469 (AAAQSEAIPPLSPAAPTKGE) is disordered.

The protein belongs to the RNA ligase 2 family. Component of the RNA editing complex (editosome), a 1600 kDa complex composed of at least 20 proteins. Interacts with terminal uridylyltransferase MEAT1.

The protein resides in the mitochondrion. The catalysed reaction is ATP + (ribonucleotide)n-3'-hydroxyl + 5'-phospho-(ribonucleotide)m = (ribonucleotide)n+m + AMP + diphosphate.. In terms of biological role, essential for RNA editing. RNA editing in kinetoplastid mitochondria inserts and deletes uridylates at multiple sites in pre-mRNAs as directed by guide RNAs. This chain is RNA-editing ligase 1, mitochondrial (REL1), found in Trypanosoma brucei brucei (strain 927/4 GUTat10.1).